A 434-amino-acid chain; its full sequence is Serine hydroxymethyltransferase (434 aa).

(6S)-5,6,7,8-tetrahydrofolate-binding positions include Leu-128 and 132 to 134 (GHL). The residue at position 237 (Lys-237) is an N6-(pyridoxal phosphate)lysine.

Belongs to the SHMT family. In terms of assembly, homodimer. Pyridoxal 5'-phosphate is required as a cofactor.

It is found in the cytoplasm. The catalysed reaction is (6R)-5,10-methylene-5,6,7,8-tetrahydrofolate + glycine + H2O = (6S)-5,6,7,8-tetrahydrofolate + L-serine. Its pathway is one-carbon metabolism; tetrahydrofolate interconversion. The protein operates within amino-acid biosynthesis; glycine biosynthesis; glycine from L-serine: step 1/1. Its function is as follows. Catalyzes the reversible interconversion of serine and glycine with tetrahydrofolate (THF) serving as the one-carbon carrier. This reaction serves as the major source of one-carbon groups required for the biosynthesis of purines, thymidylate, methionine, and other important biomolecules. Also exhibits THF-independent aldolase activity toward beta-hydroxyamino acids, producing glycine and aldehydes, via a retro-aldol mechanism. This Corynebacterium glutamicum (strain R) protein is Serine hydroxymethyltransferase.